Reading from the N-terminus, the 309-residue chain is Glutaminase (309 aa).

Positions 65, 117, 162, 169, 193, 245, and 263 each coordinate substrate.

This sequence belongs to the glutaminase family. In terms of assembly, homotetramer.

The enzyme catalyses L-glutamine + H2O = L-glutamate + NH4(+). This Clostridioides difficile (strain 630) (Peptoclostridium difficile) protein is Glutaminase.